The primary structure comprises 493 residues: Protein dml1 (493 aa).

The protein belongs to the misato family.

Its subcellular location is the mitochondrion. Functionally, involved in the partitioning of the mitochondrial organelle and mitochondrial DNA (mtDNA) inheritance. The sequence is that of Protein dml1 (dml1) from Aspergillus oryzae (strain ATCC 42149 / RIB 40) (Yellow koji mold).